The following is a 310-amino-acid chain: MTKDIQVKKLLHPRNLHRGHYDLKQLCEQSPLLSTFLRTNPKGEQTLDFAEPQAVLLLNQVLLKQFYHVDFWQIPKGYLCPPIPGRVDYIHYLADLLGDTFHGKIPEGKQVKVLDIGTGANCIYPILGSQSYGWSFVGTDIDPLSVKMAGLIIKSNVSLKPFIKVQLQANKQAIFAGIIKPKDKFTLTMCNPPFHASMEKALAGSARKIKNLSNDQNNLSRVLNFAGQEGELCCAGGEIRFLKQMIQESKDYARQVCWFTSLVSKSDNIAPLKQQLEKVGAEHVKVIKMAQGQKVSRFIAWSFLPQPQNF.

Belongs to the methyltransferase superfamily. METTL16/RlmF family.

The protein resides in the cytoplasm. The catalysed reaction is adenosine(1618) in 23S rRNA + S-adenosyl-L-methionine = N(6)-methyladenosine(1618) in 23S rRNA + S-adenosyl-L-homocysteine + H(+). In terms of biological role, specifically methylates the adenine in position 1618 of 23S rRNA. The sequence is that of Ribosomal RNA large subunit methyltransferase F from Psychromonas ingrahamii (strain DSM 17664 / CCUG 51855 / 37).